Reading from the N-terminus, the 904-residue chain is Nitrate reductase [NADH] 1 (904 aa).

2 stretches are compositionally biased toward polar residues: residues 1–10 (MAASVENRQF) and 39–50 (STNFQKKPNSTI). The interval 1–65 (MAASVENRQF…SSEDDDDDDE (65 aa)) is disordered. Acidic residues predominate over residues 56–65 (SSEDDDDDDE). Cysteine 183 serves as a coordination point for Mo-molybdopterin. The region spanning 531–606 (SKMYSMSEVR…LEEFRIGELL (76 aa)) is the Cytochrome b5 heme-binding domain. Heme is bound by residues histidine 566 and histidine 589. The 113-residue stretch at 647–759 (REKIPCKLID…KGPLGHIEYQ (113 aa)) folds into the FAD-binding FR-type domain. Residues 699–702 (RAYT), 716–720 (VVKIY), phenylalanine 721, phenylalanine 728, 733–735 (QMS), and threonine 786 each bind FAD.

Belongs to the nitrate reductase family. In terms of assembly, homodimer. The cofactor is FAD. It depends on heme as a cofactor. Mo-molybdopterin serves as cofactor.

The enzyme catalyses nitrite + NAD(+) + H2O = nitrate + NADH + H(+). With respect to regulation, regulated by the nitrogen source and controlled by the circadian rhythm. Nitrate reductase is a key enzyme involved in the first step of nitrate assimilation in plants, fungi and bacteria. The protein is Nitrate reductase [NADH] 1 (NIA1) of Nicotiana tabacum (Common tobacco).